We begin with the raw amino-acid sequence, 190 residues long: Dynactin subunit 6 (190 aa).

Threonine 186 is modified (phosphothreonine; by CDK1).

Belongs to the dynactin subunits 5/6 family. Dynactin subunit 6 subfamily. Subunit of dynactin, a multiprotein complex part of a tripartite complex with dynein and a adapter, such as BICDL1, BICD2 or HOOK3. The dynactin complex is built around ACTR1A/ACTB filament and consists of an actin-related filament composed of a shoulder domain, a pointed end and a barbed end. Its length is defined by its flexible shoulder domain. The soulder is composed of 2 DCTN1 subunits, 4 DCTN2 and 2 DCTN3. The 4 DCNT2 (via N-terminus) bind the ACTR1A filament and act as molecular rulers to determine the length. The pointed end is important for binding dynein-dynactin cargo adapters. Consists of 4 subunits: ACTR10, DCNT4, DCTN5 and DCTN6. Within the complex DCTN6 forms a heterodimer with DCTN5. The barbed end is composed of a CAPZA1:CAPZB heterodimers, which binds ACTR1A/ACTB filament and dynactin and stabilizes dynactin. Interacts with PLK1. Interacts with N4BP2L1. Post-translationally, phosphorylation at Thr-186 by CDK1 during mitotic prometaphase creates a binding site for PLK1 that facilitates its recruitment to kinetochores.

Its subcellular location is the cytoplasm. It is found in the cytoskeleton. It localises to the chromosome. The protein resides in the centromere. The protein localises to the kinetochore. Functionally, part of the dynactin complex that activates the molecular motor dynein for ultra-processive transport along microtubules. The sequence is that of Dynactin subunit 6 (DCTN6) from Bos taurus (Bovine).